Here is a 287-residue protein sequence, read N- to C-terminus: Small ribosomal subunit biogenesis GTPase RsgA (287 aa).

The 158-residue stretch at 61-218 folds into the CP-type G domain; sequence SSELIRPTVA…LVDTPGFTTL (158 aa). Residues 110 to 113 and 161 to 169 each bind GTP; these read NKED and GPSGAGKST. Residues cysteine 242, cysteine 247, histidine 249, and cysteine 255 each contribute to the Zn(2+) site.

Belongs to the TRAFAC class YlqF/YawG GTPase family. RsgA subfamily. As to quaternary structure, monomer. Associates with 30S ribosomal subunit, binds 16S rRNA. The cofactor is Zn(2+).

Its subcellular location is the cytoplasm. Its function is as follows. One of several proteins that assist in the late maturation steps of the functional core of the 30S ribosomal subunit. Helps release RbfA from mature subunits. May play a role in the assembly of ribosomal proteins into the subunit. Circularly permuted GTPase that catalyzes slow GTP hydrolysis, GTPase activity is stimulated by the 30S ribosomal subunit. This chain is Small ribosomal subunit biogenesis GTPase RsgA, found in Clostridium perfringens (strain 13 / Type A).